Here is a 573-residue protein sequence, read N- to C-terminus: MLO-like protein 2 (573 aa).

At 1 to 15 (MADQVKERTLEETST) the chain is on the extracellular side. Residues 16 to 36 (WAVAVVCFVLLFISIVLEHSI) traverse the membrane as a helical segment. Over 37-61 (HKIGTWFKKKHKQALFEALEKVKAE) the chain is Cytoplasmic. Residues 62 to 82 (LMLLGFISLLLTIGQTPISNI) traverse the membrane as a helical segment. Over 83-164 (CISQKVASTM…VSAYGIHQLH (82 aa)) the chain is Extracellular. The helical transmembrane segment at 165–185 (IFIFVLAVVHVVYCIVTYAFG) threads the bilayer. Residues 186-287 (KIKMRTWKSW…KYIQRSLEKD (102 aa)) lie on the Cytoplasmic side of the membrane. Residues 288–308 (FKTVVEISPVIWFVAVLFLLT) form a helical membrane-spanning segment. Over 309 to 317 (NSYGLRSYL) the chain is Extracellular. The helical transmembrane segment at 318–338 (WLPFIPLVVILIVGTKLEVII) threads the bilayer. At 339–371 (TKLGLRIQEKGDVVRGAPVVQPGDDLFWFGKPR) the chain is on the cytoplasmic side. Residues 372 to 392 (FILFLIHLVLFTNAFQLAFFA) form a helical membrane-spanning segment. At 393–415 (WSTYEFNLNNCFHESTADVVIRL) the chain is on the extracellular side. Residues 416–436 (VVGAVVQILCSYVTLPLYALV) traverse the membrane as a helical segment. Over 437-573 (TQMGSKMKPT…KSLRDFSFKK (137 aa)) the chain is Cytoplasmic. The tract at residues 450-471 (DRVATALKKWHHTAKNETKHGR) is calmodulin-binding. The segment at 462 to 573 (TAKNETKHGR…KSLRDFSFKK (112 aa)) is disordered. Composition is skewed to polar residues over residues 473 to 490 (SGSN…THGS) and 498 to 513 (NFNN…SPSP). S512 is modified (phosphoserine). Positions 522 to 548 (EHQFWDPESQHQEAETSTHHSLAHESS) are enriched in basic and acidic residues.

Belongs to the MLO family.

The protein localises to the membrane. Functionally, may be involved in modulation of pathogen defense and leaf cell death. Activity seems to be regulated by Ca(2+)-dependent calmodulin binding and seems not to require heterotrimeric G proteins. The chain is MLO-like protein 2 (MLO2) from Arabidopsis thaliana (Mouse-ear cress).